The sequence spans 137 residues: Large-conductance mechanosensitive channel (137 aa).

Over 1-16 (MSIIKEFREFAMRGNV) the chain is Cytoplasmic. Residues 17 to 45 (VDLAVGVIIGALFGKIVSSLVSDIIMPPL) form a helical membrane-spanning segment. At 46 to 74 (GLLIGGVDFKQFALFLRNAQGGIPAVVMN) the chain is on the periplasmic side. The chain crosses the membrane as a helical span at residues 75-94 (YGAFIQNIFDFIIVAFAIFI). The Cytoplasmic portion of the chain corresponds to 95-137 (AIKLMNKMRCKQEDTPAAPPKPSAEEKLLAEIRDLLKEQQTRQ).

Belongs to the MscL family. In terms of assembly, homopentamer.

The protein resides in the cell inner membrane. Functionally, channel that opens in response to stretch forces in the membrane lipid bilayer. Forms a nonselective ion channel with a conductance of about 4 nanosiemens. May participate in the regulation of osmotic pressure changes within the cell. The protein is Large-conductance mechanosensitive channel of Pectobacterium carotovorum (Erwinia carotovora).